A 405-amino-acid polypeptide reads, in one-letter code: Tryptophan synthase beta chain (405 aa).

Lys98 carries the N6-(pyridoxal phosphate)lysine modification.

Belongs to the TrpB family. As to quaternary structure, tetramer of two alpha and two beta chains. Pyridoxal 5'-phosphate is required as a cofactor.

It carries out the reaction (1S,2R)-1-C-(indol-3-yl)glycerol 3-phosphate + L-serine = D-glyceraldehyde 3-phosphate + L-tryptophan + H2O. It functions in the pathway amino-acid biosynthesis; L-tryptophan biosynthesis; L-tryptophan from chorismate: step 5/5. The beta subunit is responsible for the synthesis of L-tryptophan from indole and L-serine. The chain is Tryptophan synthase beta chain from Xanthomonas axonopodis pv. citri (strain 306).